The primary structure comprises 313 residues: MISDSKLLASAAWDAQSLNELKAKAGEDPAANIRPVARQVEGMFVQMMLKSMRDALPKDGLFSSEHTRLYTSMYDQQIAQQMTAGKGLGLAEMMVKQMTPEQPLPEESTPAAPMKFPLETVVRYQNQALSQLVQKAVPRNYDDSLPGDSKAFLAQLSLPAQLASQQSGVPHHLILAQAALESGWGQRQIRRENGEPSYNLFGVKASGNWKGPVTEITTTEYENGEAKKVKAKFRVYSSYLEALSDYVGLLTRNPRYAAVTTAASAEQGAQALQDAGYATDPHYARKLTNMIQQMKSISDKVSKTYSMNIDNLF.

Residues 148–313 (DSKAFLAQLS…TYSMNIDNLF (166 aa)) form a catalytic region. Active-site residues include glutamate 220 and aspartate 245.

The protein in the N-terminal section; belongs to the FlgJ family. In the C-terminal section; belongs to the glycosyl hydrolase 73 family.

Its subcellular location is the periplasm. Flagellum-specific muramidase which hydrolyzes the peptidoglycan layer to assemble the rod structure in the periplasmic space. The sequence is that of Peptidoglycan hydrolase FlgJ (flgJ) from Escherichia coli (strain K12).